The chain runs to 149 residues: UPF0179 protein Mbar_A0292 (149 aa).

The protein belongs to the UPF0179 family.

This Methanosarcina barkeri (strain Fusaro / DSM 804) protein is UPF0179 protein Mbar_A0292.